A 451-amino-acid chain; its full sequence is Bifunctional protein GlmU (451 aa).

Positions 1 to 229 (MQRHAIVLAA…FEEIMGVNDR (229 aa)) are pyrophosphorylase. UDP-N-acetyl-alpha-D-glucosamine-binding positions include 8–11 (LAAG), K22, Q72, and 77–78 (GT). D102 contributes to the Mg(2+) binding site. G139, E154, and N227 together coordinate UDP-N-acetyl-alpha-D-glucosamine. N227 contributes to the Mg(2+) binding site. Positions 230-250 (VMLSEAEKAFRKRINEQHMKN) are linker. Residues 251 to 451 (GVTIIDPVTT…QTTKEGYLKK (201 aa)) are N-acetyltransferase. The UDP-N-acetyl-alpha-D-glucosamine site is built by R332 and K350. Catalysis depends on H362, which acts as the Proton acceptor. UDP-N-acetyl-alpha-D-glucosamine-binding residues include Y365 and N376. Acetyl-CoA contacts are provided by residues 385–386 (NY), A422, and R439.

This sequence in the N-terminal section; belongs to the N-acetylglucosamine-1-phosphate uridyltransferase family. It in the C-terminal section; belongs to the transferase hexapeptide repeat family. In terms of assembly, homotrimer. Requires Mg(2+) as cofactor.

The protein localises to the cytoplasm. The catalysed reaction is alpha-D-glucosamine 1-phosphate + acetyl-CoA = N-acetyl-alpha-D-glucosamine 1-phosphate + CoA + H(+). The enzyme catalyses N-acetyl-alpha-D-glucosamine 1-phosphate + UTP + H(+) = UDP-N-acetyl-alpha-D-glucosamine + diphosphate. Its pathway is nucleotide-sugar biosynthesis; UDP-N-acetyl-alpha-D-glucosamine biosynthesis; N-acetyl-alpha-D-glucosamine 1-phosphate from alpha-D-glucosamine 6-phosphate (route II): step 2/2. The protein operates within nucleotide-sugar biosynthesis; UDP-N-acetyl-alpha-D-glucosamine biosynthesis; UDP-N-acetyl-alpha-D-glucosamine from N-acetyl-alpha-D-glucosamine 1-phosphate: step 1/1. It functions in the pathway bacterial outer membrane biogenesis; LPS lipid A biosynthesis. Its function is as follows. Catalyzes the last two sequential reactions in the de novo biosynthetic pathway for UDP-N-acetylglucosamine (UDP-GlcNAc). The C-terminal domain catalyzes the transfer of acetyl group from acetyl coenzyme A to glucosamine-1-phosphate (GlcN-1-P) to produce N-acetylglucosamine-1-phosphate (GlcNAc-1-P), which is converted into UDP-GlcNAc by the transfer of uridine 5-monophosphate (from uridine 5-triphosphate), a reaction catalyzed by the N-terminal domain. The polypeptide is Bifunctional protein GlmU (Staphylococcus saprophyticus subsp. saprophyticus (strain ATCC 15305 / DSM 20229 / NCIMB 8711 / NCTC 7292 / S-41)).